We begin with the raw amino-acid sequence, 1563 residues long: Ribulose bisphosphate carboxylase (1563 aa).

Residues histidine 32 and serine 79 each coordinate substrate. A propeptide spans 197-217 (LAAAFVGASTTRKASSVARRA) (linker). Asparagine 328 contributes to the substrate binding site. Catalysis depends on lysine 383, which acts as the Proton acceptor. Position 385 (lysine 385) interacts with substrate. Positions 408, 410, and 411 each coordinate Mg(2+). An N6-carboxylysine modification is found at lysine 408. The active-site Proton acceptor is the histidine 504. The substrate site is built by arginine 505, histidine 538, and serine 585. Residues 703 to 723 (LAAAFVGASTTRKASSVARRA) constitute a propeptide, linker. Asparagine 834 is a binding site for substrate. Lysine 889 (proton acceptor) is an active-site residue. Substrate is bound at residue lysine 891. Residues lysine 914, aspartate 916, and glutamate 917 each contribute to the Mg(2+) site. An N6-carboxylysine modification is found at lysine 914. Histidine 1010 acts as the Proton acceptor in catalysis. Residues arginine 1011, histidine 1044, and serine 1091 each coordinate substrate. The propeptide at 1209-1229 (LAAAFVGASTTRKASSVARRA) is linker. Asparagine 1340 contacts substrate. The active-site Proton acceptor is the lysine 1395. A substrate-binding site is contributed by lysine 1397. Residues lysine 1420, aspartate 1422, and glutamate 1423 each contribute to the Mg(2+) site. At lysine 1420 the chain carries N6-carboxylysine. Histidine 1516 serves as the catalytic Proton acceptor. Substrate-binding residues include arginine 1517 and histidine 1550.

The protein belongs to the RuBisCO large chain family. Type II subfamily. In terms of assembly, homodimer. Requires Mg(2+) as cofactor. In terms of processing, in Western blots an approximately 220 kDa polyprotein and 2 smaller proteins of about 55 and 52 kDa are detected, suggesting the polyprotein may be cleaved at one end of the linker and then at the other end to give mature RuBisCO.

The protein localises to the plastid. It localises to the chloroplast. It carries out the reaction 2 (2R)-3-phosphoglycerate + 2 H(+) = D-ribulose 1,5-bisphosphate + CO2 + H2O. The enzyme catalyses D-ribulose 1,5-bisphosphate + O2 = 2-phosphoglycolate + (2R)-3-phosphoglycerate + 2 H(+). RuBisCO catalyzes two reactions: the carboxylation of D-ribulose 1,5-bisphosphate, the primary event in carbon dioxide fixation, as well as the oxidative fragmentation of the pentose substrate. Both reactions occur simultaneously and in competition at the same active site. The protein is Ribulose bisphosphate carboxylase (rbcL) of Prorocentrum minimum (Dinoflagellate).